We begin with the raw amino-acid sequence, 354 residues long: MDQQENNGFGPIFKPRGKAVTFASVVIAIISGALLVFALWESEDKDGINFVFFATALLMLSVIIGELIRRVSMLAEEIRHKQTRYQGEWRRVFRSTFAFEYGSCILAVGTTSVLFVCYALLQNYEAFFRLDYGIFFILNCFVIPQLVFIVGIREPNTVEATMLNERNNKNVADGFAWNYYFGYLKLVLPRLEAQIAKSSEFRYKITKKKLYILVPKTCYVYDNIADADPRVTWAGDLTPCKINRGGIKERIYKQAVYRVAMTDKHEYFFILEYASNLMSLYDMSLHEDAPLSRQERDDQVVLFIRKLREILEGCKECRGKCEIVPISGDEKSKIADVLVAIHNATQVESDEADL.

4 consecutive transmembrane segments (helical) span residues valine 20–tryptophan 40, isoleucine 48–isoleucine 68, tyrosine 101–leucine 121, and tyrosine 132–isoleucine 152. The 3',3'-cGAMP site is built by asparagine 178, tyrosine 183, arginine 250, isoleucine 251, lysine 253, glutamate 272, serine 275, and asparagine 276.

Belongs to the STING family.

Its subcellular location is the membrane. Its function is as follows. Facilitator of innate immune signaling that acts as a sensor of second messenger signals produced by cyclic GMP-AMP synthase-like receptors (cGLRs) and promotes the production of type I interferon. Innate immune response is triggered in response to nucleotides from viruses and bacteria delivered to the cytoplasm. Acts by binding cyclic dinucleotides: recognizes and binds cyclic 3'-3' linked cGAMP (3'-3'-cGAMP), cyclic di-AMP (3',3'-c-di-AMP) and cyclic di-GMP (3',3'-c-di-GMP) second messengers produced by cGLRs in response to nucleotides in the cytosol, such as double-stranded RNA (dsRNA). Upon binding to 3'-3'-cGAMP, 3',3'-c-di-AMP or 3',3'-c-di-GMP, oligomerizes and promotes the recruitment and subsequent activation of the transcription factor IRF3 to induce expression of type I interferon. The protein is Stimulator of interferon genes protein 3 of Stylophora pistillata (Smooth cauliflower coral).